The primary structure comprises 226 residues: Beta-casein (226 aa).

Residues 1–15 (MKVLILACLVALALA) form the signal peptide. T18 bears the Phosphothreonine; in form 5-P mark. At S21 the chain carries Phosphoserine; in form 4-P and form 5-P. Residue S23 is modified to Phosphoserine; in form 3-P, form 4-P and form 5-P. 2 positions are modified to phosphoserine; in form 1-P, form 2-P, form 3-P, form 4-P and form 5-P: S24 and S25.

Belongs to the beta-casein family. Post-translationally, form 1-P is phosphorylated once; half of the molecules are phosphorylated on Ser-24, half on Ser-25. As to expression, mammary gland specific. Secreted in milk.

Its subcellular location is the secreted. Important role in determination of the surface properties of the casein micelles. This is Beta-casein (CSN2) from Homo sapiens (Human).